A 156-amino-acid polypeptide reads, in one-letter code: Small ribosomal subunit protein uS7 (156 aa).

Belongs to the universal ribosomal protein uS7 family. As to quaternary structure, part of the 30S ribosomal subunit. Contacts proteins S9 and S11.

Functionally, one of the primary rRNA binding proteins, it binds directly to 16S rRNA where it nucleates assembly of the head domain of the 30S subunit. Is located at the subunit interface close to the decoding center, probably blocks exit of the E-site tRNA. The protein is Small ribosomal subunit protein uS7 of Actinobacillus succinogenes (strain ATCC 55618 / DSM 22257 / CCUG 43843 / 130Z).